We begin with the raw amino-acid sequence, 290 residues long: ATP synthase gamma chain (290 aa).

It belongs to the ATPase gamma chain family. As to quaternary structure, F-type ATPases have 2 components, CF(1) - the catalytic core - and CF(0) - the membrane proton channel. CF(1) has five subunits: alpha(3), beta(3), gamma(1), delta(1), epsilon(1). CF(0) has three main subunits: a, b and c.

The protein resides in the cell inner membrane. Its function is as follows. Produces ATP from ADP in the presence of a proton gradient across the membrane. The gamma chain is believed to be important in regulating ATPase activity and the flow of protons through the CF(0) complex. The sequence is that of ATP synthase gamma chain from Anaeromyxobacter dehalogenans (strain 2CP-1 / ATCC BAA-258).